A 68-amino-acid polypeptide reads, in one-letter code: Large ribosomal subunit protein uL29 (68 aa).

It belongs to the universal ribosomal protein uL29 family.

This Persephonella marina (strain DSM 14350 / EX-H1) protein is Large ribosomal subunit protein uL29.